The following is a 170-amino-acid chain: Zinc finger A20 and AN1 domain-containing stress-associated protein 6 (170 aa).

An A20-type zinc finger spans residues 10–44; the sequence is PESNRLCVNNCGFLGSSATMNLCSNCYGDLCLKQQ. Residues C16, C20, C32, and C35 each contribute to the Zn(2+) site. The interval 53-76 is disordered; it reads TVESSLSVSPPSSSSSEISSPIIP. The segment at 105-151 adopts an AN1-type zinc-finger fold; sequence QQRPNRCTTCRKRVGLTGFKCRCGTMFCGVHRYPEIHGCSYDFKSAG. Zn(2+) contacts are provided by C111, C114, C125, C127, C132, H135, H141, and C143.

Its function is as follows. May be involved in environmental stress response. The chain is Zinc finger A20 and AN1 domain-containing stress-associated protein 6 (SAP6) from Arabidopsis thaliana (Mouse-ear cress).